Consider the following 909-residue polypeptide: Ribosome-releasing factor 2, mitochondrial (909 aa).

A mitochondrion-targeting transit peptide spans 1–15 (MVAAPLLRAHQAARL). The tr-type G domain occupies 57-367 (DRTRNIGIIA…AVTNLLPSPP (311 aa)). 66–73 (AHIDAGKT) is a binding site for GTP. The tract at residues 121–148 (WPPQTAGDGNTTPQEPQTPRSASSHTVN) is disordered. Polar residues predominate over residues 127-148 (GDGNTTPQEPQTPRSASSHTVN). GTP contacts are provided by residues 151-155 (DTPGH) and 205-208 (NKLD).

This sequence belongs to the TRAFAC class translation factor GTPase superfamily. Classic translation factor GTPase family. EF-G/EF-2 subfamily.

The protein resides in the mitochondrion. Functionally, mitochondrial GTPase that mediates the disassembly of ribosomes from messenger RNA at the termination of mitochondrial protein biosynthesis. Not involved in the GTP-dependent ribosomal translocation step during translation elongation. The protein is Ribosome-releasing factor 2, mitochondrial (mef2) of Aspergillus flavus (strain ATCC 200026 / FGSC A1120 / IAM 13836 / NRRL 3357 / JCM 12722 / SRRC 167).